We begin with the raw amino-acid sequence, 626 residues long: Grainyhead-like protein 3 homolog (626 aa).

Residues 30–95 (EAWKTYLENP…QGKRYYHGME (66 aa)) form a transcription activation region. The Grh/CP2 DB domain occupies 226 to 460 (SLKSDFEYTL…DLETPPVLFI (235 aa)).

Belongs to the grh/CP2 family. Grainyhead subfamily. In terms of assembly, homodimer, also forms heterodimers with GRHL1 and GRHL2. Interacts with LMO4. As to expression, expressed in brain, colon, pancreas, placenta and kidney. Isoform 1 is expressed in lung and tonsil. Isoform 2 is prostate-specific.

The protein localises to the nucleus. Transcription factor playing important roles in primary neurulation and in the differentiation of stratified epithelia of both ectodermal and endodermal origin. Binds directly to the consensus DNA sequence 5'-AACCGGTT-3' acting as an activator and repressor on distinct target genes. xhibits functional redundancy with GRHL2 in epidermal morphogenetic events and epidermal wound repair. Exhibits functional redundancy with GRHL2 in epidermal morphogenetic events and epidermal wound repair but is essential to form the epidermal barrier with TGM3 as critical direct target gene among others. Despite being dispensable during normal epidermal homeostasis in the adulthood, is again required for barrier repair after immune-mediated epidermal damage, regulates distinct gene batteries in embryonic epidermal differentiation and adult epidermal barrier reformation after injury. Plays unique and cooperative roles with GRHL2 in establishing distinct zones of primary neurulation. Essential for spinal closure, functions cooperatively with GRHL2 in closure 2 (forebrain/midbrain boundary) and posterior neuropore closure. Also required for proper development of the oral periderm. No genetic interaction with GRHL3, no functional cooperativity due to diverse target gene selectivity. This chain is Grainyhead-like protein 3 homolog, found in Homo sapiens (Human).